A 317-amino-acid chain; its full sequence is Transaldolase (317 aa).

The Schiff-base intermediate with substrate role is filled by Lys132.

This sequence belongs to the transaldolase family. Type 1 subfamily. In terms of assembly, homodimer.

The protein resides in the cytoplasm. It catalyses the reaction D-sedoheptulose 7-phosphate + D-glyceraldehyde 3-phosphate = D-erythrose 4-phosphate + beta-D-fructose 6-phosphate. Its pathway is carbohydrate degradation; pentose phosphate pathway; D-glyceraldehyde 3-phosphate and beta-D-fructose 6-phosphate from D-ribose 5-phosphate and D-xylulose 5-phosphate (non-oxidative stage): step 2/3. Transaldolase is important for the balance of metabolites in the pentose-phosphate pathway. This Mannheimia succiniciproducens (strain KCTC 0769BP / MBEL55E) protein is Transaldolase.